Consider the following 513-residue polypeptide: Type-2 serine--tRNA ligase (513 aa).

Alanine 312 lines the L-serine pocket. Cysteine 314 provides a ligand contact to Zn(2+). Arginine 344 lines the L-serine pocket. ATP is bound by residues 344–346 and 355–356; these read RWE and RV. Residue 361–363 coordinates L-serine; the sequence is RVE. 2 residues coordinate Zn(2+): glutamate 363 and cysteine 467. Arginine 474 is an ATP binding site.

This sequence belongs to the class-II aminoacyl-tRNA synthetase family. Type-2 seryl-tRNA synthetase subfamily. As to quaternary structure, homodimer. Zn(2+) serves as cofactor.

Its subcellular location is the cytoplasm. It catalyses the reaction tRNA(Ser) + L-serine + ATP = L-seryl-tRNA(Ser) + AMP + diphosphate + H(+). The enzyme catalyses tRNA(Sec) + L-serine + ATP = L-seryl-tRNA(Sec) + AMP + diphosphate + H(+). The protein operates within aminoacyl-tRNA biosynthesis; selenocysteinyl-tRNA(Sec) biosynthesis; L-seryl-tRNA(Sec) from L-serine and tRNA(Sec): step 1/1. Its function is as follows. Catalyzes the attachment of serine to tRNA(Ser). Is also able to aminoacylate tRNA(Sec) with serine, to form the misacylated tRNA L-seryl-tRNA(Sec), which will be further converted into selenocysteinyl-tRNA(Sec). In Methanothermobacter thermautotrophicus (strain ATCC 29096 / DSM 1053 / JCM 10044 / NBRC 100330 / Delta H) (Methanobacterium thermoautotrophicum), this protein is Type-2 serine--tRNA ligase (serS).